The primary structure comprises 95 residues: Acylphosphatase 2 (95 aa).

In terms of domain architecture, Acylphosphatase-like spans 6 to 93; that stretch reads RVIVTVQGRV…PLPPGFEVRP (88 aa). Active-site residues include R21 and N39.

The protein belongs to the acylphosphatase family.

The catalysed reaction is an acyl phosphate + H2O = a carboxylate + phosphate + H(+). In Ralstonia nicotianae (strain ATCC BAA-1114 / GMI1000) (Ralstonia solanacearum), this protein is Acylphosphatase 2 (acyP2).